The primary structure comprises 158 residues: C-type lectin TsL (158 aa).

Residues 1 to 23 form the signal peptide; sequence MGRFIFVSFGLLVVFLSLSGAKG. One can recognise a C-type lectin domain in the interval 24–158; the sequence is SCCTNDSLPM…KNSFLCQCKF (135 aa). Disulfide bonds link Cys26–Cys37, Cys54–Cys154, Cys61–Cys156, and Cys129–Cys146. The N-linked (GlcNAc...) (high mannose) asparagine glycan is linked to Asn28. Residues Gln119, Asp121, Glu127, Asn142, and Asp143 each coordinate Ca(2+). Residues 119-121 carry the Galactose-binding motif; it reads QPD.

The protein belongs to the true venom lectin family. Homodimer; disulfide-linked. Expressed by the venom gland.

It localises to the secreted. Its function is as follows. Galactose-binding protein which recognizes specific carbohydrate structures and agglutinates a variety of animal cells by binding to cell-surface glycoproteins and glycolipids. May be a calcium-dependent lectin. The protein is C-type lectin TsL of Trimeresurus stejnegeri (Chinese green tree viper).